A 472-amino-acid chain; its full sequence is GTPase Der (472 aa).

2 consecutive EngA-type G domains span residues 3–166 and 176–349; these read PVIA…PEQE and IRIG…DSAM. GTP-binding positions include 9–16, 56–60, 118–121, 182–189, 229–233, and 294–297; these read GRPNVGKS, DTGGI, NKID, DTAGV, and NKWD. Positions 350 to 434 constitute a KH-like domain; the sequence is AKWSTNQLTT…PIRFEFRSGE (85 aa). A disordered region spans residues 433–472; that stretch reads GENPFAGKKNKLSPRQQKKKERLMKHVKKLKHKQKRKKSR. Residues 440-472 are compositionally biased toward basic residues; the sequence is KKNKLSPRQQKKKERLMKHVKKLKHKQKRKKSR.

It belongs to the TRAFAC class TrmE-Era-EngA-EngB-Septin-like GTPase superfamily. EngA (Der) GTPase family. As to quaternary structure, associates with the 50S ribosomal subunit.

Its function is as follows. GTPase that plays an essential role in the late steps of ribosome biogenesis. This Hahella chejuensis (strain KCTC 2396) protein is GTPase Der.